The sequence spans 188 residues: dCTP deaminase (188 aa).

Residues 111–116 (KSTYAR), 135–137 (TLE), glutamine 156, tyrosine 170, lysine 179, and glutamine 180 each bind dCTP. Glutamate 137 functions as the Proton donor/acceptor in the catalytic mechanism.

This sequence belongs to the dCTP deaminase family. Homotrimer.

It catalyses the reaction dCTP + H2O + H(+) = dUTP + NH4(+). It functions in the pathway pyrimidine metabolism; dUMP biosynthesis; dUMP from dCTP (dUTP route): step 1/2. Catalyzes the deamination of dCTP to dUTP. This Rickettsia akari (strain Hartford) protein is dCTP deaminase.